Reading from the N-terminus, the 258-residue chain is Peptide methionine sulfoxide reductase A4, chloroplastic (258 aa).

The transit peptide at 1 to 53 directs the protein to the chloroplast; sequence MQVLVVSPPLIAAASLSKPLNSLSKAALSFSRAKPICPFPQTSRRPISVYKSP. Met54 carries the post-translational modification N-acetylmethionine. Residues 62–89 are disordered; it reads GFGSRPQAQADPSSAAIAQGPDDDVPSS. Phosphoserine is present on Ser245.

Belongs to the MsrA Met sulfoxide reductase family. In terms of tissue distribution, expressed in rosette and cauline leaves, and at lower levels in stems and flowers (at protein level).

The protein resides in the plastid. The protein localises to the chloroplast stroma. It catalyses the reaction L-methionyl-[protein] + [thioredoxin]-disulfide + H2O = L-methionyl-(S)-S-oxide-[protein] + [thioredoxin]-dithiol. It carries out the reaction [thioredoxin]-disulfide + L-methionine + H2O = L-methionine (S)-S-oxide + [thioredoxin]-dithiol. Catalyzes the reduction of methionine sulfoxide (MetSO) to methionine in proteins. Plays a protective role against oxidative stress by restoring activity to proteins that have been inactivated by methionine oxidation. Prevents the methionine sulfoxidation of the heat shock protein HSP21 and its subsequent inactivation. MSRA family specifically reduces the MetSO S-enantiomer. The polypeptide is Peptide methionine sulfoxide reductase A4, chloroplastic (MSR4) (Arabidopsis thaliana (Mouse-ear cress)).